The following is a 647-amino-acid chain: Threonine--tRNA ligase (647 aa).

The 61-residue stretch at 1–61 (MIKITFPDGA…EEDGSIEIVT (61 aa)) folds into the TGS domain. The catalytic stretch occupies residues 240 to 538 (DHRKLGKELD…LIETYKGAFP (299 aa)). Zn(2+) is bound by residues Cys-334, His-385, and His-515.

Belongs to the class-II aminoacyl-tRNA synthetase family. As to quaternary structure, homodimer. Zn(2+) is required as a cofactor.

The protein localises to the cytoplasm. It carries out the reaction tRNA(Thr) + L-threonine + ATP = L-threonyl-tRNA(Thr) + AMP + diphosphate + H(+). In terms of biological role, catalyzes the attachment of threonine to tRNA(Thr) in a two-step reaction: L-threonine is first activated by ATP to form Thr-AMP and then transferred to the acceptor end of tRNA(Thr). Also edits incorrectly charged L-seryl-tRNA(Thr). This is Threonine--tRNA ligase from Streptococcus pyogenes serotype M1.